The chain runs to 339 residues: tRNA N6-adenosine threonylcarbamoyltransferase (339 aa).

Fe cation contacts are provided by H111 and H115. Substrate contacts are provided by residues 139–143 (LVSGG), D172, G185, D189, and N280. Position 308 (D308) interacts with Fe cation.

The protein belongs to the KAE1 / TsaD family. It depends on Fe(2+) as a cofactor.

It localises to the cytoplasm. It carries out the reaction L-threonylcarbamoyladenylate + adenosine(37) in tRNA = N(6)-L-threonylcarbamoyladenosine(37) in tRNA + AMP + H(+). Its function is as follows. Required for the formation of a threonylcarbamoyl group on adenosine at position 37 (t(6)A37) in tRNAs that read codons beginning with adenine. Is involved in the transfer of the threonylcarbamoyl moiety of threonylcarbamoyl-AMP (TC-AMP) to the N6 group of A37, together with TsaE and TsaB. TsaD likely plays a direct catalytic role in this reaction. The protein is tRNA N6-adenosine threonylcarbamoyltransferase of Phocaeicola vulgatus (strain ATCC 8482 / DSM 1447 / JCM 5826 / CCUG 4940 / NBRC 14291 / NCTC 11154) (Bacteroides vulgatus).